A 291-amino-acid polypeptide reads, in one-letter code: Pentonolactonase XacC (291 aa).

Residues E15, N141, and D191 each coordinate a divalent metal cation. Residue D191 is the Proton donor/acceptor of the active site.

It belongs to the SMP-30/CGR1 family. In terms of assembly, monomer. It depends on a divalent metal cation as a cofactor.

It carries out the reaction L-arabinono-1,4-lactone + H2O = L-arabinonate + H(+). It catalyses the reaction D-xylono-1,4-lactone + H2O = D-xylonate + H(+). Its pathway is carbohydrate degradation. In terms of biological role, pentonolactonase involved in D-arabinose and D-xylose catabolism. Catalyzes the hydrolysis of both L-arabino-gamma-lactone and D-xylono-gamma-lactone to the corresponding acids. Can also hydrolyze D-galactono-gamma-lactone and D-glucono-delta-lactone. This is Pentonolactonase XacC from Haloferax volcanii (strain ATCC 29605 / DSM 3757 / JCM 8879 / NBRC 14742 / NCIMB 2012 / VKM B-1768 / DS2) (Halobacterium volcanii).